A 122-amino-acid chain; its full sequence is Ribosome-binding factor A (122 aa).

It belongs to the RbfA family. Monomer. Binds 30S ribosomal subunits, but not 50S ribosomal subunits or 70S ribosomes.

The protein resides in the cytoplasm. One of several proteins that assist in the late maturation steps of the functional core of the 30S ribosomal subunit. Associates with free 30S ribosomal subunits (but not with 30S subunits that are part of 70S ribosomes or polysomes). Required for efficient processing of 16S rRNA. May interact with the 5'-terminal helix region of 16S rRNA. The chain is Ribosome-binding factor A from Syntrophomonas wolfei subsp. wolfei (strain DSM 2245B / Goettingen).